The chain runs to 229 residues: Ribonuclease 3 (229 aa).

The RNase III domain maps to Leu-5 to Gly-127. Glu-40 is a binding site for Mg(2+). Asp-44 is an active-site residue. Mg(2+) is bound by residues Asp-113 and Glu-116. Glu-116 is an active-site residue. In terms of domain architecture, DRBM spans Asp-154–Val-224.

Belongs to the ribonuclease III family. Homodimer. The cofactor is Mg(2+).

The protein localises to the cytoplasm. It carries out the reaction Endonucleolytic cleavage to 5'-phosphomonoester.. Digests double-stranded RNA. Involved in the processing of primary rRNA transcript to yield the immediate precursors to the large and small rRNAs (23S and 16S). Processes some mRNAs, and tRNAs when they are encoded in the rRNA operon. Processes pre-crRNA and tracrRNA of type II CRISPR loci if present in the organism. The polypeptide is Ribonuclease 3 (Pseudomonas fluorescens (strain Pf0-1)).